We begin with the raw amino-acid sequence, 415 residues long: Serine hydroxymethyltransferase (415 aa).

Residues Leu120 and 124 to 126 (GHL) contribute to the (6S)-5,6,7,8-tetrahydrofolate site. Lys229 carries the post-translational modification N6-(pyridoxal phosphate)lysine.

It belongs to the SHMT family. In terms of assembly, homodimer. Pyridoxal 5'-phosphate serves as cofactor.

It is found in the cytoplasm. The enzyme catalyses (6R)-5,10-methylene-5,6,7,8-tetrahydrofolate + glycine + H2O = (6S)-5,6,7,8-tetrahydrofolate + L-serine. The protein operates within one-carbon metabolism; tetrahydrofolate interconversion. Its pathway is amino-acid biosynthesis; glycine biosynthesis; glycine from L-serine: step 1/1. Functionally, catalyzes the reversible interconversion of serine and glycine with tetrahydrofolate (THF) serving as the one-carbon carrier. This reaction serves as the major source of one-carbon groups required for the biosynthesis of purines, thymidylate, methionine, and other important biomolecules. Also exhibits THF-independent aldolase activity toward beta-hydroxyamino acids, producing glycine and aldehydes, via a retro-aldol mechanism. The sequence is that of Serine hydroxymethyltransferase from Pelotomaculum thermopropionicum (strain DSM 13744 / JCM 10971 / SI).